A 280-amino-acid chain; its full sequence is Myb family transcription factor PHL11 (280 aa).

The HTH myb-type domain maps to 20–80 (RDPKPRLRWT…HLQKYRLGQQ (61 aa)). The H-T-H motif DNA-binding region spans 51-76 (PKSVLKLMGLKGLTLYHLKSHLQKYR). The interval 77–98 (LGQQQGKKQNRTEQNKENAGSS) is disordered. The segment at 129–149 (AEAMRHQVDAQQRFQEQLEVQ) is coiled coil. The LHEQLE motif lies at 142-147 (FQEQLE).

The protein belongs to the MYB-CC family.

It localises to the nucleus. The chain is Myb family transcription factor PHL11 from Arabidopsis thaliana (Mouse-ear cress).